Reading from the N-terminus, the 365-residue chain is Mannose-1-phosphate guanylyltransferase catalytic subunit beta (365 aa).

The segment at 2–221 (KALILVGGYG…PGFWMDVGQP (220 aa)) is substrate-binding domain. Aspartate 109 contributes to the GDP-alpha-D-mannose binding site. Position 109 (aspartate 109) interacts with Mg(2+). Lysine 161 is a catalytic residue. Position 217 (aspartate 217) interacts with GDP-alpha-D-mannose. A Mg(2+)-binding site is contributed by aspartate 217. Residues 244–365 (ETGSNIHPTA…VNVPSKDIIM (122 aa)) are hexapeptide repeat domain.

This sequence belongs to the transferase hexapeptide repeat family. As to quaternary structure, component of the GMPPA-GMPPB mannose-1-phosphate guanylyltransferase complex composed of 4 GMPPA subunits and 8 tag-335/GMPPB subunits; the complex is organized into three layers, a central layer made up of 2 GMPPA dimers sandwiched between two layers each made up of 2 tag-335/GMPPB dimers. Catalytic activity of tag-335/GMPPB is reduced when part of the complex and binding of GDP-alpha-D-Mannose by GMPPA induces allosteric feedback inhibition of tag-335/GMPPB. It depends on Mg(2+) as a cofactor.

The catalysed reaction is alpha-D-mannose 1-phosphate + GTP + H(+) = GDP-alpha-D-mannose + diphosphate. It participates in nucleotide-sugar biosynthesis; GDP-alpha-D-mannose biosynthesis; GDP-alpha-D-mannose from alpha-D-mannose 1-phosphate (GTP route): step 1/1. Enzyme activity is reduced by incorporation into the GMPPA-GMPPB mannose-1-phosphate guanylyltransferase complex. Allosterically inhibited, when part of the GMPPA-GMPPB complex, by GDP-alpha-D-mannose binding to GMPPA. Catalytic subunit of the GMPPA-GMPPB mannose-1-phosphate guanylyltransferase complex. Catalyzes the formation of GDP-mannose, an essential precursor of glycan moieties of glycoproteins and glycolipids. Can catalyze the reverse reaction in vitro. Together with GMPPA regulates GDP-alpha-D-mannose levels. The protein is Mannose-1-phosphate guanylyltransferase catalytic subunit beta (tag-335) of Caenorhabditis elegans.